A 175-amino-acid polypeptide reads, in one-letter code: Protein-export protein SecB (175 aa).

Over residues 153–163 (QQQPDAANGND) the composition is skewed to polar residues. Positions 153 to 175 (QQQPDAANGNDSGIILPPGATRQ) are disordered.

Belongs to the SecB family. Homotetramer, a dimer of dimers. One homotetramer interacts with 1 SecA dimer.

Its subcellular location is the cytoplasm. Its function is as follows. One of the proteins required for the normal export of preproteins out of the cell cytoplasm. It is a molecular chaperone that binds to a subset of precursor proteins, maintaining them in a translocation-competent state. It also specifically binds to its receptor SecA. This is Protein-export protein SecB from Bordetella bronchiseptica (strain ATCC BAA-588 / NCTC 13252 / RB50) (Alcaligenes bronchisepticus).